The sequence spans 585 residues: Protein FAM13C (585 aa).

Disordered stretches follow at residues 26-45 (PVSL…ENNK), 83-138 (SMGN…NAFK), and 171-216 (EAAQ…APED). Basic and acidic residues-rich tracts occupy residues 27 to 45 (VSLH…ENNK) and 99 to 112 (ESGR…ETEH). A Phosphoserine modification is found at serine 131. Serine 238 carries the phosphoserine modification. Disordered regions lie at residues 250-282 (FNLD…DGKE), 349-391 (EEQG…EETP), and 441-477 (IPTI…DHLT). A compositionally biased stretch (polar residues) spans 262–275 (STQQFMMPRSSSRC). A phosphoserine mark is found at serine 385 and serine 386.

This sequence belongs to the FAM13 family.

This chain is Protein FAM13C (FAM13C), found in Homo sapiens (Human).